The primary structure comprises 431 residues: Gamma-glutamyl phosphate reductase (431 aa).

This sequence belongs to the gamma-glutamyl phosphate reductase family.

The protein localises to the cytoplasm. The catalysed reaction is L-glutamate 5-semialdehyde + phosphate + NADP(+) = L-glutamyl 5-phosphate + NADPH + H(+). It functions in the pathway amino-acid biosynthesis; L-proline biosynthesis; L-glutamate 5-semialdehyde from L-glutamate: step 2/2. Functionally, catalyzes the NADPH-dependent reduction of L-glutamate 5-phosphate into L-glutamate 5-semialdehyde and phosphate. The product spontaneously undergoes cyclization to form 1-pyrroline-5-carboxylate. In Synechococcus elongatus (strain ATCC 33912 / PCC 7942 / FACHB-805) (Anacystis nidulans R2), this protein is Gamma-glutamyl phosphate reductase.